We begin with the raw amino-acid sequence, 341 residues long: MSVLTNPSLLLLRNSEKLVGKSILVVNFVQDGFLAELKKRNPESKITAFSYNHANGEFAKNTPGVDVCVNHCISGNDFDLVILYYPKSKPEVLMALDNIRAVITADAELLVVGENKSGVKSIEKQLTDKANFSNKIDSAKHCVLYSFAELKQLSQFNISDYHKPFTVSVADSEFTAISIPGVFNHGNLDVGTKILLENAPLIKQGTVLDFGCGAGLIATYLGLQNPALSFVCSDVSALAIYATTQTLKLNNIKGEALLSDGLTNITGKFDLIISNPPFHTGIATDYTVAETFLANAKQHLTKAGKLNIVANSFLKYPPILEAQFDNYQTVFKNNKFAVYSS.

It belongs to the methyltransferase superfamily. RsmC family. As to quaternary structure, monomer.

Its subcellular location is the cytoplasm. It carries out the reaction guanosine(1207) in 16S rRNA + S-adenosyl-L-methionine = N(2)-methylguanosine(1207) in 16S rRNA + S-adenosyl-L-homocysteine + H(+). Specifically methylates the guanine in position 1207 of 16S rRNA in the 30S particle. The polypeptide is Ribosomal RNA small subunit methyltransferase C (Pseudoalteromonas translucida (strain TAC 125)).